We begin with the raw amino-acid sequence, 297 residues long: 4-hydroxy-tetrahydrodipicolinate synthase (297 aa).

T51 serves as a coordination point for pyruvate. Y139 functions as the Proton donor/acceptor in the catalytic mechanism. Catalysis depends on K167, which acts as the Schiff-base intermediate with substrate. A pyruvate-binding site is contributed by V209.

Belongs to the DapA family. Homotetramer; dimer of dimers.

The protein resides in the cytoplasm. It catalyses the reaction L-aspartate 4-semialdehyde + pyruvate = (2S,4S)-4-hydroxy-2,3,4,5-tetrahydrodipicolinate + H2O + H(+). It participates in amino-acid biosynthesis; L-lysine biosynthesis via DAP pathway; (S)-tetrahydrodipicolinate from L-aspartate: step 3/4. In terms of biological role, catalyzes the condensation of (S)-aspartate-beta-semialdehyde [(S)-ASA] and pyruvate to 4-hydroxy-tetrahydrodipicolinate (HTPA). This chain is 4-hydroxy-tetrahydrodipicolinate synthase, found in Albidiferax ferrireducens (strain ATCC BAA-621 / DSM 15236 / T118) (Rhodoferax ferrireducens).